Here is a 324-residue protein sequence, read N- to C-terminus: Beta-ketoacyl-[acyl-carrier-protein] synthase III (324 aa).

Active-site residues include Cys112 and His249. Residues 250 to 254 (QANRR) form an ACP-binding region. Asn279 is an active-site residue.

This sequence belongs to the thiolase-like superfamily. FabH family. As to quaternary structure, homodimer.

Its subcellular location is the cytoplasm. The catalysed reaction is malonyl-[ACP] + acetyl-CoA + H(+) = 3-oxobutanoyl-[ACP] + CO2 + CoA. The protein operates within lipid metabolism; fatty acid biosynthesis. Functionally, catalyzes the condensation reaction of fatty acid synthesis by the addition to an acyl acceptor of two carbons from malonyl-ACP. Catalyzes the first condensation reaction which initiates fatty acid synthesis and may therefore play a role in governing the total rate of fatty acid production. Possesses both acetoacetyl-ACP synthase and acetyl transacylase activities. Its substrate specificity determines the biosynthesis of branched-chain and/or straight-chain of fatty acids. This is Beta-ketoacyl-[acyl-carrier-protein] synthase III from Streptococcus pyogenes serotype M6 (strain ATCC BAA-946 / MGAS10394).